The chain runs to 277 residues: Large ribosomal subunit protein uL2 (277 aa).

Basic residues-rich tracts occupy residues 210 to 219 (RARWAGKRPQ) and 259 to 277 (TRSK…RNKK). Residues 210 to 277 (RARWAGKRPQ…KFIVRSRNKK (68 aa)) form a disordered region.

This sequence belongs to the universal ribosomal protein uL2 family. Part of the 50S ribosomal subunit. Forms a bridge to the 30S subunit in the 70S ribosome.

Its function is as follows. One of the primary rRNA binding proteins. Required for association of the 30S and 50S subunits to form the 70S ribosome, for tRNA binding and peptide bond formation. It has been suggested to have peptidyltransferase activity; this is somewhat controversial. Makes several contacts with the 16S rRNA in the 70S ribosome. This Ligilactobacillus salivarius (strain UCC118) (Lactobacillus salivarius) protein is Large ribosomal subunit protein uL2.